Here is a 258-residue protein sequence, read N- to C-terminus: Phosphate import ATP-binding protein PstB (258 aa).

The ABC transporter domain occupies 12-253 (LEVKNLNFYY…PARKETEDYI (242 aa)). 44-51 (GPSGCGKS) contributes to the ATP binding site.

It belongs to the ABC transporter superfamily. Phosphate importer (TC 3.A.1.7) family. The complex is composed of two ATP-binding proteins (PstB), two transmembrane proteins (PstC and PstA) and a solute-binding protein (PstS).

The protein localises to the cell inner membrane. The catalysed reaction is phosphate(out) + ATP + H2O = ADP + 2 phosphate(in) + H(+). Part of the ABC transporter complex PstSACB involved in phosphate import. Responsible for energy coupling to the transport system. This Bordetella parapertussis (strain 12822 / ATCC BAA-587 / NCTC 13253) protein is Phosphate import ATP-binding protein PstB.